We begin with the raw amino-acid sequence, 182 residues long: NADH-quinone oxidoreductase subunit I (182 aa).

2 consecutive 4Fe-4S ferredoxin-type domains span residues 52–82 (LTRDPDGEERCVACNLCAVACPVGCISLQKA) and 92–121 (EFFRINFSRCIFCGLCEEACPTTAIQLTPD). [4Fe-4S] cluster-binding residues include Cys62, Cys65, Cys68, Cys72, Cys101, Cys104, Cys107, and Cys111.

The protein belongs to the complex I 23 kDa subunit family. NDH-1 is composed of 13 different subunits. Subunits NuoA, H, J, K, L, M, N constitute the membrane sector of the complex. The cofactor is [4Fe-4S] cluster.

It is found in the cell inner membrane. The catalysed reaction is a quinone + NADH + 5 H(+)(in) = a quinol + NAD(+) + 4 H(+)(out). In terms of biological role, NDH-1 shuttles electrons from NADH, via FMN and iron-sulfur (Fe-S) centers, to quinones in the respiratory chain. The immediate electron acceptor for the enzyme in this species is believed to be ubiquinone. Couples the redox reaction to proton translocation (for every two electrons transferred, four hydrogen ions are translocated across the cytoplasmic membrane), and thus conserves the redox energy in a proton gradient. The chain is NADH-quinone oxidoreductase subunit I from Pseudomonas aeruginosa (strain LESB58).